The chain runs to 295 residues: MHYSHFYFIINNTNMTINAIPKLFATKNSISLSIVIFMYLLILVANVKSDSSFNFPNFQPEALKKLGFANDATLKNGVIQLTKKDAYGDPLKHSAGQFGLLKPIRLFDQTTGKVASFVTEFTFSVNSNGRQDHGDGFAFFMASPKFKIPNKNKSEGGFLGMFTRETALYTKEIVLVEFDSFANEWDPNPSSNLGIGSHLGIDVNSIKSVANALWLNDFDDITVGKARIEYDSSDKNLKVLVTYSEKGAFNGDSSLVYNIDLTTFLPEMIEIGFSASTGDLVETHDILSWSFTSNM.

Residues 1–22 (MHYSHFYFIINNTNMTINAIPK) lie on the Cytoplasmic side of the membrane. Residues 23–45 (LFATKNSISLSIVIFMYLLILVA) traverse the membrane as a helical segment. The Extracellular segment spans residues 46-295 (NVKSDSSFNF…ILSWSFTSNM (250 aa)). N152 is a glycosylation site (N-linked (GlcNAc...) asparagine).

Belongs to the leguminous lectin family.

It is found in the membrane. Its function is as follows. May be involved in arbuscular mycorrhizal (AM) symbiosis with AM fungi. The polypeptide is Lectin 11 (Medicago truncatula (Barrel medic)).